A 245-amino-acid chain; its full sequence is Protein OXIDATIVE STRESS 3 LIKE 6 (245 aa).

The segment at 46–90 is disordered; that stretch reads QIGIGLRMSNNNNKSPEESSDSSSSIGESSENEEEEEEDDAVSCQ. A compositionally biased stretch (acidic residues) spans 75 to 86; it reads SENEEEEEEDDA. Residues 143-151 carry the Nuclear localization signal motif; the sequence is NKRRRLVIA. The kinase-inducible domain (KID) stretch occupies residues 203 to 230; it reads DDHRKIMMMMKNKKELMAQTRSCFCLSS.

The protein resides in the nucleus. Probable transcription factor. Promotes slightly the tolerance to cadmium (Cd) and to oxidizing chemicals (e.g. diamide). The sequence is that of Protein OXIDATIVE STRESS 3 LIKE 6 from Arabidopsis thaliana (Mouse-ear cress).